We begin with the raw amino-acid sequence, 163 residues long: Mediator of RNA polymerase II transcription subunit 10 (163 aa).

The tract at residues 57 to 79 (AAPDPSYVQSPPSRTGLSPADPP) is disordered. Residues 63-72 (YVQSPPSRTG) show a composition bias toward polar residues.

It belongs to the Mediator complex subunit 10 family. As to quaternary structure, component of the Mediator complex.

Its subcellular location is the nucleus. Component of the Mediator complex, a coactivator involved in the regulated transcription of nearly all RNA polymerase II-dependent genes. Mediator functions as a bridge to convey information from gene-specific regulatory proteins to the basal RNA polymerase II transcription machinery. Mediator is recruited to promoters by direct interactions with regulatory proteins and serves as a scaffold for the assembly of a functional preinitiation complex with RNA polymerase II and the general transcription factors. The protein is Mediator of RNA polymerase II transcription subunit 10 (NUT2) of Coccidioides immitis (strain RS) (Valley fever fungus).